The primary structure comprises 344 residues: Arginine N-succinyltransferase (344 aa).

A succinyl-CoA-binding site is contributed by leucine 125. The Proton donor role is filled by histidine 229.

It belongs to the arginine N-succinyltransferase family.

It carries out the reaction succinyl-CoA + L-arginine = N(2)-succinyl-L-arginine + CoA + H(+). The protein operates within amino-acid degradation; L-arginine degradation via AST pathway; L-glutamate and succinate from L-arginine: step 1/5. Functionally, catalyzes the transfer of succinyl-CoA to arginine to produce N(2)-succinylarginine. In Shigella boydii serotype 18 (strain CDC 3083-94 / BS512), this protein is Arginine N-succinyltransferase.